Reading from the N-terminus, the 129-residue chain is UPF0148 protein AF_2370 (129 aa).

The tract at residues serine 61–lysine 80 is disordered.

The protein belongs to the UPF0148 family.

This Archaeoglobus fulgidus (strain ATCC 49558 / DSM 4304 / JCM 9628 / NBRC 100126 / VC-16) protein is UPF0148 protein AF_2370.